Reading from the N-terminus, the 285-residue chain is Protein FD (285 aa).

The span at 1–12 shows a compositional bias: basic residues; the sequence is MLSSAKHQRNHR. Disordered stretches follow at residues 1-59, 79-107, 115-134, 198-236, and 257-285; these read MLSS…QKRS, NRHS…NSIF, LNQE…NGDS, SSSF…ARKQ, and KRQQ…TAPF. Residues 13–25 show a composition bias toward polar residues; sequence LSATNKNQTLTKV. The span at 26 to 50 shows a compositional bias: low complexity; the sequence is SSISSSSPSSSSSSSSTSSSSPLPS. A compositionally biased stretch (polar residues) spans 98-107; it reads HHNQNPNSIF. The bZIP domain occupies 214-277; sequence GNRRHKRMIK…AIQQPKKNTL (64 aa). Residues 216–235 are basic motif; that stretch reads RRHKRMIKNRESAARSRARK. The leucine-zipper stretch occupies residues 242 to 263; the sequence is LELEVAHLQAENARLKRQQDQL. Residues 272 to 285 are compositionally biased toward polar residues; it reads PKKNTLQRSSTAPF. Thr282 bears the Phosphothreonine mark.

This sequence belongs to the bZIP family. As to quaternary structure, self-interacts. Interacts with FT and FDP/BZIP27. Interacts with GRF3 and GRF4, and in a calcium-independent manner, with CPK6 and CPK33. Phosphorylated at Thr-282 in a calcium-dependent manner by CPK6 and CPK33. As to expression, highly expressed in shoot apex.

It localises to the nucleus. Transcription factor required for the transition to flowering promoted by FT. This is Protein FD from Arabidopsis thaliana (Mouse-ear cress).